The sequence spans 299 residues: MSKHVVETDIKELKLLSRGKVRDIYEVDDDKLLLVTTDRISAYDVIMPNPIDDKGKILNQITLFWMDMFKDIIPNHLIASKVDDYPEVLHKYRDQLEGRSVLVKKAKPLPIECIVRGYITGSGWKDYQKTGEVCGHKLPEGLKESEMLEQPLFTPSTKAELGEHDENISVEKATEMLGKELFDKVQEATLSIYKRGRDYAREKGIIIADTKFEFGIYDGELIIIDEVLTPDSSRFWPVEGYEAGKSQPSFDKQFLRDWLTEINFNKQPPAPEVPEEIATKTRDKYMEAFTLLTESELDA.

It belongs to the SAICAR synthetase family.

It carries out the reaction 5-amino-1-(5-phospho-D-ribosyl)imidazole-4-carboxylate + L-aspartate + ATP = (2S)-2-[5-amino-1-(5-phospho-beta-D-ribosyl)imidazole-4-carboxamido]succinate + ADP + phosphate + 2 H(+). Its pathway is purine metabolism; IMP biosynthesis via de novo pathway; 5-amino-1-(5-phospho-D-ribosyl)imidazole-4-carboxamide from 5-amino-1-(5-phospho-D-ribosyl)imidazole-4-carboxylate: step 1/2. The chain is Phosphoribosylaminoimidazole-succinocarboxamide synthase from Maridesulfovibrio salexigens (strain ATCC 14822 / DSM 2638 / NCIMB 8403 / VKM B-1763) (Desulfovibrio salexigens).